A 278-amino-acid polypeptide reads, in one-letter code: MEALEEKEAQVAAWLKKIFGDHPIPQYEVNAWTTEILYNLSERNRIRDRDVYLVTEDLKQKAKEYESEAKHLQDLLMESVNFSPASLSSTGSRYLNALVDSAVVLETKDTSLASFIPAVNDLTSDLFRTKSKNEEIKLELAKLEKNLTATLVLEKCLQEDLKKAELHLCTERARVDSRLQNMDFLKAKSEEFRSGIRTAEEQLSARGMDASLSHQSLVALSEKLAELKRQTMPLKKKLESYLDLMPNPSLAQVKIEEAKRELDTIEAELTKRVNMMEL.

3 coiled-coil regions span residues 53–81 (LVTEDLKQKAKEYESEAKHLQDLLMESVN), 124–152 (SDLFRTKSKNEEIKLELAKLEKNLTATLV), and 183–277 (DFLK…NMME).

This sequence belongs to the HAUS1 family. Component of the HAUS augmin-like complex. The complex interacts with the gamma-tubulin ring complex and this interaction is required for spindle assembly. Associates with microtubules. The interaction with microtubules is strong during mitosis, while it is weak or absent during interphase. It is unclear whether this interaction is direct or indirect. Interacts with EML3 (phosphorylated form).

The protein resides in the cytoplasm. Its subcellular location is the cytoskeleton. It localises to the microtubule organizing center. It is found in the centrosome. The protein localises to the spindle. The protein resides in the spindle pole. Contributes to mitotic spindle assembly, maintenance of centrosome integrity and completion of cytokinesis as part of the HAUS augmin-like complex. The sequence is that of HAUS augmin-like complex subunit 1 (HAUS1) from Bos taurus (Bovine).